We begin with the raw amino-acid sequence, 85 residues long: Depressant insect toxin BmK ITa1 (85 aa).

The N-terminal stretch at 1–21 (MKLFLLLLISASMLIDGLVNA) is a signal peptide. Residues 22-82 (DGYIRGSNGC…TWKSESNTCG (61 aa)) enclose the LCN-type CS-alpha/beta domain. 4 disulfide bridges follow: C31–C81, C35–C56, C42–C63, and C46–C65. G82 is modified (glycine amide).

This sequence belongs to the long (4 C-C) scorpion toxin superfamily. Sodium channel inhibitor family. Beta subfamily. In terms of tissue distribution, expressed by the venom gland.

The protein localises to the secreted. In terms of biological role, depressant insect toxins cause a transient contraction paralysis followed by a slow flaccid paralysis. They bind voltage-independently to sodium channels (Nav) and block action potentials, primarily by depolarizing the axonal membrane and suppressing the sodium current. The polypeptide is Depressant insect toxin BmK ITa1 (Olivierus martensii (Manchurian scorpion)).